A 910-amino-acid polypeptide reads, in one-letter code: DnaJ-like protein MG200 homolog (910 aa).

Positions 4–73 (AKRDYYEVLG…RANYDKYGHD (70 aa)) constitute a J domain. 3 disordered regions span residues 102–160 (DNLS…DDIP), 260–408 (TEPS…LEQD), and 451–486 (VLSD…STAP). A compositionally biased stretch (basic residues) spans 111-121 (KKEKTKTKKKG). The span at 273-283 (DSDAVTAATTV) shows a compositional bias: low complexity. The segment covering 357–379 (SDEADATNEPTEQDTISEPEQET) has biased composition (acidic residues). Polar residues predominate over residues 451 to 462 (VLSDQNPNPQTP).

The polypeptide is DnaJ-like protein MG200 homolog (Mycoplasma pneumoniae (strain ATCC 29342 / M129 / Subtype 1) (Mycoplasmoides pneumoniae)).